The chain runs to 462 residues: Sodium-coupled neutral amino acid transporter 7 (462 aa).

At serine 28 the chain carries Phosphoserine. 11 helical membrane-spanning segments follow: residues 56 to 76 (AIFIVVNACLGAGLLNFPAAF), 82 to 102 (VAAGIALQMGMLVFIISGLVI), 130 to 150 (LCEVAIAVYTFGTCIAFLIII), 178 to 198 (FTISLTAFLFILPLSIPREIG), 205 to 225 (FLSVVGTWYVTAIVIIKYIWP), 239 to 259 (ASWMAVFNAMPTICFGFQCHV), 282 to 302 (AAMVIALAVYMGTGICGFLTF), 319 to 339 (MAVAVARAFIILSVLTSYPIL), 371 to 391 (VLQTLVWFLLTLLLALFIPDI), 395 to 415 (ISVIGGLAACFIFVFPGLCLI), and 428 to 448 (ASWWVLVSYGVLLVTLGAFIF).

It belongs to the amino acid/polyamine transporter 2 family. Interacts with the mTORC1 complex; this interaction mediates the recruitment of mTORC1 to the lysosome and its subsequent activation.

The protein localises to the lysosome membrane. Its subcellular location is the cell projection. It is found in the axon. It carries out the reaction L-asparagine(in) + Na(+)(in) = L-asparagine(out) + Na(+)(out). The enzyme catalyses L-glutamine(in) + Na(+)(in) = L-glutamine(out) + Na(+)(out). In terms of biological role, symporter that selectively cotransports sodium ions and amino acids, such as L-glutamine and L-asparagine from the lysosome into the cytoplasm and may participates in mTORC1 activation. The transport activity requires an acidic lysosomal lumen. The sequence is that of Sodium-coupled neutral amino acid transporter 7 from Homo sapiens (Human).